The following is a 465-amino-acid chain: MAKQAPDVGDYKYGFHDEDVSIFRSERGLTENIVTEISKMKEEPQWMLDFRLKALKLFYKMPMPQWGGDLSELDFDDITYYVKPSEHTERSWDEVPEEIKRTFDKLGIPEAEQKYLAGVSAQYESEVVYHNMEKELEEKGIIFKDTDSALRENEELFREYFASVVPAADNKFAALNSAVWSGGSFIYVPKNVKLDTPLQAYFRINSENMGQFERTLIIADEGASVNYVEGCTAPVYSTSSLHSAVVEIIVHKDAHVRYTTIQNWANNVYNLVTKRTFVHENGNMEWVDGNLGSKLTMKYPNCVLLGEGAKGSTLSIAFAGKGQVQDAGAKMIHKAPNTSSTIVSKSISKNGGKVIYRGIVHFGRKAKGARSNIECDTLILDNESTSDTIPYNEVFNDNISLEHEAKVSKVSEEQLFYLMSRGISEEEATEMIVMGFIEPFTKELPMEYAVEMNRLIKFEMEGSIG.

It belongs to the iron-sulfur cluster assembly SufBD family.

The sequence is that of Iron-sulfur cluster assembly SufBD family protein SERP0500 from Staphylococcus epidermidis (strain ATCC 35984 / DSM 28319 / BCRC 17069 / CCUG 31568 / BM 3577 / RP62A).